A 225-amino-acid polypeptide reads, in one-letter code: Uridylate kinase (225 aa).

9–10 (GS) is an ATP binding site. Gly46 contacts UMP. The ATP site is built by Gly47 and Arg51. UMP is bound by residues Asp67 and 115–121 (THPAHTT). ATP is bound by residues Thr141, Asn142, Tyr147, and Asp150.

It belongs to the UMP kinase family. Homohexamer.

Its subcellular location is the cytoplasm. The catalysed reaction is UMP + ATP = UDP + ADP. The protein operates within pyrimidine metabolism; CTP biosynthesis via de novo pathway; UDP from UMP (UMPK route): step 1/1. Its activity is regulated as follows. Inhibited by UTP. Its function is as follows. Catalyzes the reversible phosphorylation of UMP to UDP. The sequence is that of Uridylate kinase from Methanococcus maripaludis (strain DSM 14266 / JCM 13030 / NBRC 101832 / S2 / LL).